The sequence spans 543 residues: tRNA (guanine(37)-N(1))-methyltransferase (543 aa).

Residues 1 to 59 (MLKSLCFVIRPAIVSRPQFRLPTIARLSLRQFQNQPQSVGFFTMAPLETRALALSPSAT) constitute a mitochondrion transit peptide. S-adenosyl-L-methionine-binding positions include histidine 282, 320-321 (DL), and 348-349 (DG). Residues 366 to 405 (DPAPPPKVSNRQRDREAKEARRKREQAKAAGQPVTETAPM) are disordered. S-adenosyl-L-methionine is bound at residue asparagine 431.

The protein belongs to the class I-like SAM-binding methyltransferase superfamily. TRM5/TYW2 family. As to quaternary structure, monomer.

Its subcellular location is the mitochondrion matrix. It localises to the nucleus. The protein localises to the cytoplasm. The enzyme catalyses guanosine(37) in tRNA + S-adenosyl-L-methionine = N(1)-methylguanosine(37) in tRNA + S-adenosyl-L-homocysteine + H(+). Specifically methylates the N1 position of guanosine-37 in various cytoplasmic and mitochondrial tRNAs. Methylation is not dependent on the nature of the nucleoside 5' of the target nucleoside. This is the first step in the biosynthesis of wybutosine (yW), a modified base adjacent to the anticodon of tRNAs and required for accurate decoding. The protein is tRNA (guanine(37)-N(1))-methyltransferase of Cryptococcus neoformans var. neoformans serotype D (strain JEC21 / ATCC MYA-565) (Filobasidiella neoformans).